The chain runs to 308 residues: Elongation factor Ts (308 aa).

The involved in Mg(2+) ion dislocation from EF-Tu stretch occupies residues 80 to 83 (TDFV).

Belongs to the EF-Ts family.

It is found in the cytoplasm. Functionally, associates with the EF-Tu.GDP complex and induces the exchange of GDP to GTP. It remains bound to the aminoacyl-tRNA.EF-Tu.GTP complex up to the GTP hydrolysis stage on the ribosome. The polypeptide is Elongation factor Ts (Rhodopseudomonas palustris (strain BisB5)).